We begin with the raw amino-acid sequence, 329 residues long: Olfactory receptor 10J3 (329 aa).

Residues 1–26 (MPKLNSTFVTEFLFEGFSSFRRQHKL) are Extracellular-facing. Asn5 is a glycosylation site (N-linked (GlcNAc...) asparagine). A helical transmembrane segment spans residues 27 to 47 (VFFVVFLTLYLLTLSGNVIIM). Topologically, residues 48-55 (TIIRLDHH) are cytoplasmic. The helical transmembrane segment at 56–76 (LHTPMYFFLCMLSISETCYTV) threads the bilayer. At 77-100 (AIIPHMLSGLLNPHQPIATQSCAT) the chain is on the extracellular side. A disulfide bridge links Cys98 with Cys190. A helical membrane pass occupies residues 101–121 (QLFFYLTFGINNCFLLTVMGY). Residues 122 to 140 (DRYVAICNPLRYSVIMGKR) lie on the Cytoplasmic side of the membrane. Residues 141-161 (ACIQLASGSLGIGLGMAIVQV) traverse the membrane as a helical segment. Over 162–198 (TSVFGLPFCDAFVISHFFCDVRHLLKLACTDTTVNEI) the chain is Extracellular. The chain crosses the membrane as a helical span at residues 199-218 (INFVVSVCVLVLPMGLVFIS). Residues 219-238 (YVLIISTILKIASAEGQKKA) are Cytoplasmic-facing. The helical transmembrane segment at 239–259 (FATCASHLTVVIIHYGCASII) threads the bilayer. Residues 260 to 272 (YLKPKSQSSLGQD) are Extracellular-facing. Residues 273-293 (RLISVTYTHHSPTEPCCVQPE) form a helical membrane-spanning segment. Over 294 to 329 (EQGGQRCSAQSRGAKNSVSLMKRGCEGFSFAFINMY) the chain is Cytoplasmic.

The protein belongs to the G-protein coupled receptor 1 family.

Its subcellular location is the cell membrane. Its function is as follows. Odorant receptor. This is Olfactory receptor 10J3 (OR10J3) from Homo sapiens (Human).